The primary structure comprises 366 residues: UDP-N-acetylglucosamine--N-acetylmuramyl-(pentapeptide) pyrophosphoryl-undecaprenol N-acetylglucosamine transferase (366 aa).

UDP-N-acetyl-alpha-D-glucosamine contacts are provided by residues 15–17, Asn127, Arg175, Ser201, Ile255, and Gln300; that span reads TGG.

Belongs to the glycosyltransferase 28 family. MurG subfamily.

The protein resides in the cell inner membrane. The enzyme catalyses di-trans,octa-cis-undecaprenyl diphospho-N-acetyl-alpha-D-muramoyl-L-alanyl-D-glutamyl-meso-2,6-diaminopimeloyl-D-alanyl-D-alanine + UDP-N-acetyl-alpha-D-glucosamine = di-trans,octa-cis-undecaprenyl diphospho-[N-acetyl-alpha-D-glucosaminyl-(1-&gt;4)]-N-acetyl-alpha-D-muramoyl-L-alanyl-D-glutamyl-meso-2,6-diaminopimeloyl-D-alanyl-D-alanine + UDP + H(+). It participates in cell wall biogenesis; peptidoglycan biosynthesis. Functionally, cell wall formation. Catalyzes the transfer of a GlcNAc subunit on undecaprenyl-pyrophosphoryl-MurNAc-pentapeptide (lipid intermediate I) to form undecaprenyl-pyrophosphoryl-MurNAc-(pentapeptide)GlcNAc (lipid intermediate II). The chain is UDP-N-acetylglucosamine--N-acetylmuramyl-(pentapeptide) pyrophosphoryl-undecaprenol N-acetylglucosamine transferase from Thiobacillus denitrificans (strain ATCC 25259 / T1).